Here is a 693-residue protein sequence, read N- to C-terminus: Elongation factor G (693 aa).

The 275-residue stretch at 8–282 (KNTRNIGIMA…AVIDYLPSPL (275 aa)) folds into the tr-type G domain. GTP-binding positions include 17–24 (AHIDAGKT), 81–85 (DTPGH), and 135–138 (NKMD).

The protein belongs to the TRAFAC class translation factor GTPase superfamily. Classic translation factor GTPase family. EF-G/EF-2 subfamily.

The protein resides in the cytoplasm. Its function is as follows. Catalyzes the GTP-dependent ribosomal translocation step during translation elongation. During this step, the ribosome changes from the pre-translocational (PRE) to the post-translocational (POST) state as the newly formed A-site-bound peptidyl-tRNA and P-site-bound deacylated tRNA move to the P and E sites, respectively. Catalyzes the coordinated movement of the two tRNA molecules, the mRNA and conformational changes in the ribosome. The sequence is that of Elongation factor G from Staphylococcus intermedius.